A 244-amino-acid chain; its full sequence is Electron transfer flavoprotein beta subunit lysine methyltransferase homolog (244 aa).

This sequence belongs to the methyltransferase superfamily. ETFBKMT family.

Functionally, probable methyltransferase. The sequence is that of Electron transfer flavoprotein beta subunit lysine methyltransferase homolog from Caenorhabditis elegans.